A 439-amino-acid chain; its full sequence is UDP-N-acetylmuramate--L-alanine ligase (439 aa).

113-119 (GSHGKTS) contacts ATP.

Belongs to the MurCDEF family.

It localises to the cytoplasm. It carries out the reaction UDP-N-acetyl-alpha-D-muramate + L-alanine + ATP = UDP-N-acetyl-alpha-D-muramoyl-L-alanine + ADP + phosphate + H(+). It functions in the pathway cell wall biogenesis; peptidoglycan biosynthesis. Its function is as follows. Cell wall formation. This is UDP-N-acetylmuramate--L-alanine ligase from Lactobacillus delbrueckii subsp. bulgaricus (strain ATCC 11842 / DSM 20081 / BCRC 10696 / JCM 1002 / NBRC 13953 / NCIMB 11778 / NCTC 12712 / WDCM 00102 / Lb 14).